A 255-amino-acid polypeptide reads, in one-letter code: Imidazole glycerol phosphate synthase subunit HisF (255 aa).

Residues D11 and D130 contribute to the active site.

This sequence belongs to the HisA/HisF family. Heterodimer of HisH and HisF.

The protein localises to the cytoplasm. The catalysed reaction is 5-[(5-phospho-1-deoxy-D-ribulos-1-ylimino)methylamino]-1-(5-phospho-beta-D-ribosyl)imidazole-4-carboxamide + L-glutamine = D-erythro-1-(imidazol-4-yl)glycerol 3-phosphate + 5-amino-1-(5-phospho-beta-D-ribosyl)imidazole-4-carboxamide + L-glutamate + H(+). It functions in the pathway amino-acid biosynthesis; L-histidine biosynthesis; L-histidine from 5-phospho-alpha-D-ribose 1-diphosphate: step 5/9. In terms of biological role, IGPS catalyzes the conversion of PRFAR and glutamine to IGP, AICAR and glutamate. The HisF subunit catalyzes the cyclization activity that produces IGP and AICAR from PRFAR using the ammonia provided by the HisH subunit. This chain is Imidazole glycerol phosphate synthase subunit HisF, found in Rhodopseudomonas palustris (strain BisA53).